Here is a 677-residue protein sequence, read N- to C-terminus: MTQVAKKILVTCALPYANGSIHLGHMLEHIQADVWVRYQRMRGHEVNFICADDAHGTPIMLKAQQLGITPEQMIGEMSQEHQTDFAGFNISYDNYHSTHSEENRQLSELIYTRLKENGFIKNRTISQLYDPEKGMFLPDRFVKGTCPKCKAPDQYGDNCEVCGATYSPTELIEPKSVVSGATPVMRDSEHFFFDLPSFSEMLQAWTRSGALQEQVANKMQEWFESGLQQWDISRDAPYFGFEIPNAPGKYFYVWLDAPIGYMGSFKNLCDKRGDSVSFDEYWKKDSTAELYHFIGKDIVYFHSLFWPAMLEGSNFRKPTNLFVHGYVTVNGAKMSKSRGTFIKASTWLNHFDADSLRYYYTAKLSSRIDDIDLNLEDFVQRVNADIVNKVVNLASRNAGFINKRFDGVLASELADPQLYKTFTDAAEVIGEAWESREFGKAIREIMALADLANRYVDEQAPWVVAKQEGRDADLQAICSMGINLFRVLMTYLKPVLPKLTERAEAFLNTELTWDGIQQPLLGHKVNPFKALYNRIDMKQVEALVEASKEEVKAAAAPVTGPLADDPIQETITFDDFAKVDLRVALIENAEFVEGSDKLLRLTLDLGGEKRNVFSGIRSAYPDPQALIGRHTIMVANLAPRKMRFGISEGMVMAAGPGGKDIFLLSPDAGAKPGHQVK.

The 'HIGH' region motif lies at 15–25 (PYANGSIHLGH). Zn(2+)-binding residues include Cys-146, Cys-149, Cys-159, and Cys-162. The 'KMSKS' region motif lies at 333 to 337 (KMSKS). Lys-336 is a binding site for ATP. Residues 575–677 (DFAKVDLRVA…AGAKPGHQVK (103 aa)) form the tRNA-binding domain.

The protein belongs to the class-I aminoacyl-tRNA synthetase family. MetG type 1 subfamily. In terms of assembly, homodimer. Requires Zn(2+) as cofactor.

It localises to the cytoplasm. It carries out the reaction tRNA(Met) + L-methionine + ATP = L-methionyl-tRNA(Met) + AMP + diphosphate. Functionally, is required not only for elongation of protein synthesis but also for the initiation of all mRNA translation through initiator tRNA(fMet) aminoacylation. This Escherichia coli O127:H6 (strain E2348/69 / EPEC) protein is Methionine--tRNA ligase.